A 416-amino-acid polypeptide reads, in one-letter code: Exodeoxyribonuclease 7 large subunit (416 aa).

Belongs to the XseA family. As to quaternary structure, heterooligomer composed of large and small subunits.

It localises to the cytoplasm. It carries out the reaction Exonucleolytic cleavage in either 5'- to 3'- or 3'- to 5'-direction to yield nucleoside 5'-phosphates.. Its function is as follows. Bidirectionally degrades single-stranded DNA into large acid-insoluble oligonucleotides, which are then degraded further into small acid-soluble oligonucleotides. In Sulfurimonas denitrificans (strain ATCC 33889 / DSM 1251) (Thiomicrospira denitrificans (strain ATCC 33889 / DSM 1251)), this protein is Exodeoxyribonuclease 7 large subunit.